We begin with the raw amino-acid sequence, 678 residues long: UvrABC system protein B (678 aa).

The region spanning 31-417 (ENLNDGLAHQ…KSGTEIIDQV (387 aa)) is the Helicase ATP-binding domain. 44–51 (GVTGSGKT) serves as a coordination point for ATP. The Beta-hairpin signature appears at 97–120 (YYDYYQPEAYVPSSDTFIEKDASI). In terms of domain architecture, Helicase C-terminal spans 436–602 (QVDDLLSEAR…GLNKKVGELL (167 aa)). Residues 603-625 (DIGQGGSNKSRNKPRSQKAAEPA) are disordered. One can recognise a UVR domain in the interval 638–673 (QQQIKKLEQQMYKFAQDLEFEKAAAIRDQLHKLREQ).

It belongs to the UvrB family. As to quaternary structure, forms a heterotetramer with UvrA during the search for lesions. Interacts with UvrC in an incision complex.

Its subcellular location is the cytoplasm. The UvrABC repair system catalyzes the recognition and processing of DNA lesions. A damage recognition complex composed of 2 UvrA and 2 UvrB subunits scans DNA for abnormalities. Upon binding of the UvrA(2)B(2) complex to a putative damaged site, the DNA wraps around one UvrB monomer. DNA wrap is dependent on ATP binding by UvrB and probably causes local melting of the DNA helix, facilitating insertion of UvrB beta-hairpin between the DNA strands. Then UvrB probes one DNA strand for the presence of a lesion. If a lesion is found the UvrA subunits dissociate and the UvrB-DNA preincision complex is formed. This complex is subsequently bound by UvrC and the second UvrB is released. If no lesion is found, the DNA wraps around the other UvrB subunit that will check the other stand for damage. This is UvrABC system protein B from Mannheimia succiniciproducens (strain KCTC 0769BP / MBEL55E).